The sequence spans 320 residues: Chitinase 3 (320 aa).

The signal sequence occupies residues 1–18 (MRALALAVVAMAVVAVRG). Positions 19–59 (EQCGSQAGGALCPNCLCCSQYGWCGSTSDYCGAGCQSQCSG) constitute a Chitin-binding type-1 domain. Cystine bridges form between cysteine 21–cysteine 36, cysteine 30–cysteine 42, cysteine 33–cysteine 61, cysteine 35–cysteine 49, cysteine 53–cysteine 57, cysteine 97–cysteine 159, cysteine 172–cysteine 180, and cysteine 279–cysteine 311. The active-site Proton donor is glutamate 141.

This sequence belongs to the glycosyl hydrolase 19 family. Chitinase class I subfamily. In terms of tissue distribution, expressed at low levels in roots, leaves, sheaths and meristems.

It carries out the reaction Random endo-hydrolysis of N-acetyl-beta-D-glucosaminide (1-&gt;4)-beta-linkages in chitin and chitodextrins.. Hydrolyzes chitin and plays a role in defense against fungal pathogens containing chitin. Inhibits the growth of T.reesei fungus on plate assay. In Oryza sativa subsp. japonica (Rice), this protein is Chitinase 3 (Cht3).